We begin with the raw amino-acid sequence, 1993 residues long: [F-actin]-monooxygenase MICAL3 (1993 aa).

A monooxygenase domain region spans residues 2 to 494 (EERKQETTNQ…RHLYDSGETK (493 aa)). FAD-binding positions include cysteine 97, 116–118 (EKR), 123–125 (RNN), phenylalanine 183, tyrosine 298, and aspartate 398. The Calponin-homology (CH) domain maps to 518-624 (VARSSKLLGW…YLTQFYEMFK (107 aa)). Phosphoserine is present on serine 649. A disordered region spans residues 658-704 (GQTISRKRSPKDKKEKDSDGAGKRRKTSQSEEEEPPRSYKGERPTLV). Over residues 669-679 (DKKEKDSDGAG) the composition is skewed to basic and acidic residues. A phosphoserine mark is found at serine 685 and serine 687. Residues 762-824 (DTCYFCQKRV…KPHYCYRLSG (63 aa)) form the LIM zinc-binding domain. Zn(2+) is bound by residues cysteine 764, cysteine 767, histidine 785, cysteine 788, cysteine 791, cysteine 794, cysteine 814, and histidine 817. The segment at 854 to 886 (NGLASVAASSAERSPGTSMNGLEEPSIAKRLRG) is disordered. The span at 860 to 873 (AASSAERSPGTSMN) shows a compositional bias: polar residues. The residue at position 887 (threonine 887) is a Phosphothreonine. Disordered stretches follow at residues 905–1023 (ELEE…RLQQ), 1039–1309 (WTHI…LSGP), 1332–1546 (IRRS…FFTP), and 1559–1837 (KENG…EELK). Acidic residues predominate over residues 938-951 (SEMEEEEEEDDEDD). Over residues 975–988 (GRSEEELEASKNFE) the composition is skewed to basic and acidic residues. Serine 977 carries the phosphoserine modification. Acidic residues predominate over residues 989-1014 (PEEEEEEEEYEEEDEEYEEEEEEESS). Residues 1039-1051 (WTHIREREAEERM) show a composition bias toward basic and acidic residues. A compositionally biased stretch (acidic residues) spans 1065-1090 (DEDDLEEDADSEPAETEGEAAEDGDP). The segment covering 1111-1148 (EAEHRLQSQAKVKAELELRVSENEEEKPSDAPKQEERG) has biased composition (basic and acidic residues). Serine 1131 and serine 1187 each carry phosphoserine. The segment covering 1199–1212 (LREKPKAEVPEEQK) has biased composition (basic and acidic residues). Over residues 1230–1239 (SPTSPTSLQP) the composition is skewed to polar residues. Over residues 1245–1255 (PPTPPTPPPTQ) the composition is skewed to pro residues. Over residues 1257 to 1275 (PICSQPQPSSDASIPSPTK) the composition is skewed to polar residues. Residue serine 1272 is modified to Phosphoserine. Threonine 1274 is subject to Phosphothreonine. Residues serine 1276 and serine 1335 each carry the phosphoserine modification. Threonine 1339 bears the Phosphothreonine mark. Phosphoserine occurs at positions 1369 and 1382. Basic and acidic residues predominate over residues 1405–1420 (PSDKELRSSQEERRDL). Residues 1421–1433 (SSSSGLGLHDSSS) show a composition bias toward low complexity. Residue serine 1431 is modified to Phosphoserine. Residues 1434–1452 (NMKTLGSQSFNTSDSTMLT) show a composition bias toward polar residues. At threonine 1452 the chain carries Phosphothreonine. Over residues 1454–1465 (PSSPPPPPPPNE) the composition is skewed to pro residues. Positions 1516–1530 (SVDEIPFADDVEDTY) are enriched in acidic residues. Basic and acidic residues predominate over residues 1584 to 1600 (EAKELAEERMRAREKSV). Residues 1623–1633 (SSRSHTAQSQG) show a composition bias toward polar residues. Position 1640 is a phosphoserine (serine 1640). Over residues 1665-1685 (SPPSDSGGPDGSVTSSEGSSG) the composition is skewed to low complexity. The span at 1686–1704 (KSKKRSSLFSPRRNKKEKK) shows a compositional bias: basic residues. Serine 1692 and serine 1695 each carry phosphoserine. Over residues 1754–1763 (TPSSGATVDS) the composition is skewed to polar residues. Basic and acidic residues predominate over residues 1795–1811 (ILERSSQKSKREPRTYT). The stretch at 1817–1983 (AKLTRRVQKA…EEDKDLEAAM (167 aa)) forms a coiled coil. A compositionally biased stretch (basic residues) spans 1819–1830 (LTRRVQKAARRQ). The bMERB domain maps to 1832–1981 (KQEELKRLHR…EKEEDKDLEA (150 aa)). At serine 1903 the chain carries Phosphoserine.

It belongs to the Mical family. Interacts with RAB1B, RAB8A, RAB10, RAB13 and RAB15 (in their GTP-bound forms); binding to RAB1B is of low affinity compared to other Rab proteins; at least in case of RAB8A can bind 2 molecules of RAB8A simultaneously through a high and a low affinity binding site, respectively. Interacts with ERC1 and RAB8A; may bridge ERC1 with RAB8A. Interacts with KIF23 and ERC1; enhances the interaction between KIF23 and ERC1. Interacts with NINL. The cofactor is FAD.

It localises to the cytoplasm. The protein localises to the cell cortex. It is found in the cytoskeleton. Its subcellular location is the nucleus. The protein resides in the midbody. It localises to the spindle. The protein localises to the cilium basal body. The enzyme catalyses L-methionyl-[F-actin] + NADPH + O2 + H(+) = L-methionyl-(R)-S-oxide-[F-actin] + NADP(+) + H2O. Its function is as follows. Monooxygenase that promotes depolymerization of F-actin by mediating oxidation of specific methionine residues on actin to form methionine-sulfoxide, resulting in actin filament disassembly and preventing repolymerization. In the absence of actin, it also functions as a NADPH oxidase producing H(2)O(2). Seems to act as Rab effector protein and play a role in vesicle trafficking. Involved in exocytic vesicles tethering and fusion: the monooxygenase activity is required for this process and implicates RAB8A associated with exocytotic vesicles. Required for cytokinesis. Contributes to stabilization and/or maturation of the intercellular bridge independently of its monooxygenase activity. Promotes recruitment of Rab8 and ERC1 to the intercellular bridge, and together these proteins are proposed to function in timely abscission. This chain is [F-actin]-monooxygenase MICAL3 (Mical3), found in Mus musculus (Mouse).